A 105-amino-acid chain; its full sequence is Large ribosomal subunit protein uL24 (105 aa).

It belongs to the universal ribosomal protein uL24 family. As to quaternary structure, part of the 50S ribosomal subunit.

Functionally, one of two assembly initiator proteins, it binds directly to the 5'-end of the 23S rRNA, where it nucleates assembly of the 50S subunit. One of the proteins that surrounds the polypeptide exit tunnel on the outside of the subunit. In Tolumonas auensis (strain DSM 9187 / NBRC 110442 / TA 4), this protein is Large ribosomal subunit protein uL24.